A 570-amino-acid polypeptide reads, in one-letter code: Urease subunit alpha (570 aa).

In terms of domain architecture, Urease spans 131–570 (GGMDSHIHFI…LPMAQRYFLF (440 aa)). The Ni(2+) site is built by histidine 136, histidine 138, and lysine 219. At lysine 219 the chain carries N6-carboxylysine. Histidine 221 provides a ligand contact to substrate. Residues histidine 248 and histidine 274 each coordinate Ni(2+). Residue histidine 322 is the Proton donor of the active site. Aspartate 362 contacts Ni(2+).

The protein belongs to the metallo-dependent hydrolases superfamily. Urease alpha subunit family. In terms of assembly, heterotrimer of UreA (gamma), UreB (beta) and UreC (alpha) subunits. Three heterotrimers associate to form the active enzyme. Requires Ni cation as cofactor. Post-translationally, carboxylation allows a single lysine to coordinate two nickel ions.

The protein localises to the cytoplasm. It catalyses the reaction urea + 2 H2O + H(+) = hydrogencarbonate + 2 NH4(+). It participates in nitrogen metabolism; urea degradation; CO(2) and NH(3) from urea (urease route): step 1/1. The chain is Urease subunit alpha from Allorhizobium ampelinum (strain ATCC BAA-846 / DSM 112012 / S4) (Agrobacterium vitis (strain S4)).